The following is a 51-amino-acid chain: Cuticle protein CP575 (51 aa).

One can recognise a Chitin-binding type R&amp;R domain in the interval 1-51; that stretch reads GDIIDVDNDLFEHEQDGVAGTSVHGEYEAYDAYGNEYEVKYIADHLGFRVL.

As to expression, calcified shell.

The chain is Cuticle protein CP575 from Cancer pagurus (Rock crab).